The following is a 308-amino-acid chain: MAVLPAQQHGLLVLNKPQGPTSAQCIARVKRLGQKKIGHAGTLDPMARGVLLVLLGHATKISGHLMADGEKVYLGTLRLGTTTDTWDAEGSVTATAPYDHVTPDDIRREVENWLGSTEQEVPPYSAAKHQGQPLYKLSRAGRETPVKTKTVEISRAQVVSCDLPSATFRVTCSSGTYIRSLAHSLGMRLGCGAMLTELTREYSHPFGIDEAHELDAVLAEPERLPERVIPVTRALPHWPKLRISAAQEAGVRNGMIVPYLPEAMAELPFAEGLKAIMLAPDDTPVALAETRIVNAQPVWTVLRGLWSQ.

Asp-44 acts as the Nucleophile in catalysis.

Belongs to the pseudouridine synthase TruB family. Type 1 subfamily.

The enzyme catalyses uridine(55) in tRNA = pseudouridine(55) in tRNA. In terms of biological role, responsible for synthesis of pseudouridine from uracil-55 in the psi GC loop of transfer RNAs. The chain is tRNA pseudouridine synthase B from Nitratidesulfovibrio vulgaris (strain DSM 19637 / Miyazaki F) (Desulfovibrio vulgaris).